A 382-amino-acid chain; its full sequence is Nonsense-mediated mRNA decay factor SMG9 (382 aa).

A disordered region spans residues 1–66 (MKKVEILKTP…PDSSVSKSSG (66 aa)).

It belongs to the SMG9 family.

Involved in nonsense-mediated decay (NMD) of mRNAs containing premature stop codons. Probable component of kinase complex containing smg-1 and recruited to stalled ribosomes. The protein is Nonsense-mediated mRNA decay factor SMG9 (smg-9) of Caenorhabditis briggsae.